The following is a 269-amino-acid chain: Eukaryotic translation initiation factor 3 subunit G-1 (269 aa).

Residues 188-266 enclose the RRM domain; it reads AAIRISNLSE…LILSVEWSKP (79 aa).

This sequence belongs to the eIF-3 subunit G family. In terms of assembly, component of the eukaryotic translation initiation factor 3 (eIF-3) complex. The eIF-3 complex interacts with pix.

The protein localises to the cytoplasm. RNA-binding component of the eukaryotic translation initiation factor 3 (eIF-3) complex, which is involved in protein synthesis of a specialized repertoire of mRNAs and, together with other initiation factors, stimulates binding of mRNA and methionyl-tRNAi to the 40S ribosome. The eIF-3 complex specifically targets and initiates translation of a subset of mRNAs involved in cell proliferation. This subunit can bind 18S rRNA. The chain is Eukaryotic translation initiation factor 3 subunit G-1 from Drosophila willistoni (Fruit fly).